Here is a 446-residue protein sequence, read N- to C-terminus: MGRLFGTDGVRGLANEKLTAPLAMRLGAAAARVLTEKKSTDRRPTAIIGRDPRVSGEMLTAALSAGLASQGVDVLDVGVLPTPAVAFLTDDYGSDMGVMVSASHNPMPDNGIKFFAIGGRKLEDWIEDEIEQEMGKLPEEGPTGAAIGRVFDQSHSALDRYLHHLQQAVHTRLDGIKVVVDCAHGAAYQAAPMAYEAAGAEVVAVSNKPNGYNINDGVGSTHIDQLQKAVVEHGADLGLAHDGDADRCLAVDAQGNVVDGDQIMAVLALSMKDGGELKRNTLVATVMSNLGLKLAMERNGITLRQTQVGDRYVVEDLRAGDYSLGGEQSGHIVIPEHGTTGDGLLTGLFLMARMATTGKTLAELASAMQVLPQTLINVPVSNKAAIAGDARVKQAIAKAEEELGETGRVLLRPSGTEELFRVMVEAADSATARKIAGQLAAVVAEV.

The active-site Phosphoserine intermediate is Ser-103. Positions 103, 242, 244, and 246 each coordinate Mg(2+). Phosphoserine is present on Ser-103.

Belongs to the phosphohexose mutase family. Requires Mg(2+) as cofactor. In terms of processing, activated by phosphorylation.

The catalysed reaction is alpha-D-glucosamine 1-phosphate = D-glucosamine 6-phosphate. Functionally, catalyzes the conversion of glucosamine-6-phosphate to glucosamine-1-phosphate. The polypeptide is Phosphoglucosamine mutase (Corynebacterium urealyticum (strain ATCC 43042 / DSM 7109)).